Reading from the N-terminus, the 356-residue chain is Competence protein ComGA (356 aa).

144-151 is a binding site for ATP; sequence GPTGSGKT.

The protein belongs to the GSP E family.

The protein localises to the cell membrane. Required for uptake of DNA by competent cells. The chain is Competence protein ComGA (comGA) from Bacillus subtilis (strain 168).